The following is a 65-amino-acid chain: Disintegrin CC5 (65 aa).

One can recognise a Disintegrin domain in the interval 1 to 65 (MNSAHPCCDP…SDCPRNRYKS (65 aa)). Intrachain disulfides connect Cys-7-Cys-30, Cys-21-Cys-27, Cys-26-Cys-51, and Cys-39-Cys-58. A Cell attachment site motif is present at residues 43–45 (RGD).

The protein belongs to the disintegrin family. Dimeric disintegrin subfamily. As to quaternary structure, homodimer; disulfide-linked. In terms of tissue distribution, expressed by the venom gland.

The protein localises to the secreted. Binds and inhibits integrins alpha-IIb/beta-3 (ITGA2B/ITGB3), alpha-V/beta-3 (ITGAV/ITGB3) and alpha-5/beta-1 (ITGA5/ITGB1). The protein is Disintegrin CC5 of Cerastes cerastes (Horned desert viper).